Consider the following 122-residue polypeptide: MIIVESNLDVADNSGARRVQCIKVLGGSKRRTASVGDVIVVSIKDAIPRGKVKKGDVHQAVVVRTAYPVRRADGSVIRFDRNAAVLINKQMEPIGTRIFGPVTRELRARKFMKIISLAPEVL.

The protein belongs to the universal ribosomal protein uL14 family. In terms of assembly, part of the 50S ribosomal subunit. Forms a cluster with proteins L3 and L19. In the 70S ribosome, L14 and L19 interact and together make contacts with the 16S rRNA in bridges B5 and B8.

Binds to 23S rRNA. Forms part of two intersubunit bridges in the 70S ribosome. The protein is Large ribosomal subunit protein uL14 of Acidiphilium cryptum (strain JF-5).